The chain runs to 244 residues: Leucyl/phenylalanyl-tRNA--protein transferase (244 aa).

Residues 1-22 (MHSQPYLLSPAPNNTPFPPAEH) are disordered.

This sequence belongs to the L/F-transferase family.

It is found in the cytoplasm. The catalysed reaction is N-terminal L-lysyl-[protein] + L-leucyl-tRNA(Leu) = N-terminal L-leucyl-L-lysyl-[protein] + tRNA(Leu) + H(+). It carries out the reaction N-terminal L-arginyl-[protein] + L-leucyl-tRNA(Leu) = N-terminal L-leucyl-L-arginyl-[protein] + tRNA(Leu) + H(+). It catalyses the reaction L-phenylalanyl-tRNA(Phe) + an N-terminal L-alpha-aminoacyl-[protein] = an N-terminal L-phenylalanyl-L-alpha-aminoacyl-[protein] + tRNA(Phe). Functions in the N-end rule pathway of protein degradation where it conjugates Leu, Phe and, less efficiently, Met from aminoacyl-tRNAs to the N-termini of proteins containing an N-terminal arginine or lysine. The chain is Leucyl/phenylalanyl-tRNA--protein transferase from Xylella fastidiosa (strain M12).